The following is a 233-amino-acid chain: Antiholin-like protein LrgB (233 aa).

Helical transmembrane passes span 9 to 29 (TPYFGILLSVIPFFLATILFE), 34 to 54 (FFLFAPLFVSMVFGVAFLYLT), 63 to 83 (IGGDIIYFFLEPATICFAIPL), 97 to 117 (IIGGIGIGTVVALLIILTFAK), 121 to 141 (FANDVILSMLPQAATTAIALP), 144 to 164 (AGIGGIKELTSLAVILNGVII), and 212 to 232 (IALVLVGVVVVAVVPVFVAIF).

It belongs to the CidB/LrgB family. LrgB subfamily.

It is found in the cell membrane. Inhibits the expression or activity of extracellular murein hydrolases by interacting, possibly with LrgA, with the holin-like proteins CidA and/or CidB. The LrgAB and CidAB proteins may affect the proton motive force of the membrane. May be involved in programmed cell death (PCD), possibly triggering PCD in response to antibiotics and environmental stresses. The chain is Antiholin-like protein LrgB from Staphylococcus aureus (strain Mu3 / ATCC 700698).